The following is a 943-amino-acid chain: Isoleucine--tRNA ligase (943 aa).

Residues Pro58–His68 carry the 'HIGH' region motif. Glu567 provides a ligand contact to L-isoleucyl-5'-AMP. A 'KMSKS' region motif is present at residues Lys608–Ser612. Lys611 is a binding site for ATP. Zn(2+) is bound by residues Cys906, Cys909, Cys926, and Cys929.

Belongs to the class-I aminoacyl-tRNA synthetase family. IleS type 1 subfamily. Monomer. Zn(2+) is required as a cofactor.

It is found in the cytoplasm. It carries out the reaction tRNA(Ile) + L-isoleucine + ATP = L-isoleucyl-tRNA(Ile) + AMP + diphosphate. Functionally, catalyzes the attachment of isoleucine to tRNA(Ile). As IleRS can inadvertently accommodate and process structurally similar amino acids such as valine, to avoid such errors it has two additional distinct tRNA(Ile)-dependent editing activities. One activity is designated as 'pretransfer' editing and involves the hydrolysis of activated Val-AMP. The other activity is designated 'posttransfer' editing and involves deacylation of mischarged Val-tRNA(Ile). This is Isoleucine--tRNA ligase from Pseudomonas fluorescens (strain SBW25).